A 338-amino-acid chain; its full sequence is ATP synthase subunit a (338 aa).

A helical transmembrane segment spans residues 15-35; that stretch reads IAVLVMPLLLGFGAPIYAAAE. Residues 45–66 are disordered; that stretch reads AAAVHTDEAHGEAGEHAEGGHG. Residues 49–65 are compositionally biased toward basic and acidic residues; it reads HTDEAHGEAGEHAEGGH. A run of 7 helical transmembrane segments spans residues 109 to 129, 174 to 194, 199 to 219, 238 to 258, 262 to 282, 287 to 307, and 308 to 328; these read HVVFMWLAALILLLVFGYVGN, LLTVFVFILVLNLLGLIPYGA, NINVTLTLSVFTFFITQVSAI, ALWIIMIPIEVIGLFTKPFAL, LFANMTAGHIIILSLIFISFI, IVAIFVSVPFSIFIYLLEIFV, and SFLQAFIFTMLSALFIGLGSA.

The protein belongs to the ATPase A chain family. As to quaternary structure, F-type ATPases have 2 components, CF(1) - the catalytic core - and CF(0) - the membrane proton channel. CF(1) has five subunits: alpha(3), beta(3), gamma(1), delta(1), epsilon(1). CF(0) has four main subunits: a, b, b' and c.

Its subcellular location is the cell inner membrane. Key component of the proton channel; it plays a direct role in the translocation of protons across the membrane. The chain is ATP synthase subunit a from Chlorobium phaeobacteroides (strain BS1).